The chain runs to 218 residues: 1-Cys peroxiredoxin PER1 (218 aa).

In terms of domain architecture, Thioredoxin spans 4–164 (LTIGDTVPNL…VVRAVDSLLT (161 aa)). Cys46 acts as the Cysteine sulfenic acid (-SOH) intermediate in catalysis. The Bipartite nuclear localization signal signature appears at 194 to 217 (KKMFPQGFETADLPSKKGYLRFTK).

It belongs to the peroxiredoxin family. Prx6 subfamily.

It localises to the nucleus. The protein resides in the cytoplasm. The catalysed reaction is a hydroperoxide + [thioredoxin]-dithiol = an alcohol + [thioredoxin]-disulfide + H2O. Thiol-specific peroxidase that catalyzes the reduction of hydrogen peroxide and organic hydroperoxides to water and alcohols, respectively. Seems to contribute to the inhibition of germination during stress. The polypeptide is 1-Cys peroxiredoxin PER1 (PER1) (Triticum aestivum (Wheat)).